Consider the following 128-residue polypeptide: Sulfurtransferase TusD (128 aa).

C78 (cysteine persulfide intermediate) is an active-site residue.

Belongs to the DsrE/TusD family. As to quaternary structure, heterohexamer, formed by a dimer of trimers. The hexameric TusBCD complex contains 2 copies each of TusB, TusC and TusD. The TusBCD complex interacts with TusE.

The protein localises to the cytoplasm. Its function is as follows. Part of a sulfur-relay system required for 2-thiolation of 5-methylaminomethyl-2-thiouridine (mnm(5)s(2)U) at tRNA wobble positions. Accepts sulfur from TusA and transfers it in turn to TusE. In Escherichia fergusonii (strain ATCC 35469 / DSM 13698 / CCUG 18766 / IAM 14443 / JCM 21226 / LMG 7866 / NBRC 102419 / NCTC 12128 / CDC 0568-73), this protein is Sulfurtransferase TusD.